A 263-amino-acid polypeptide reads, in one-letter code: 3-methyl-2-oxobutanoate hydroxymethyltransferase (263 aa).

Mg(2+) contacts are provided by aspartate 45 and aspartate 84. 3-methyl-2-oxobutanoate contacts are provided by residues 45 to 46 (DS), aspartate 84, and lysine 112. Mg(2+) is bound at residue glutamate 114. The Proton acceptor role is filled by glutamate 181.

It belongs to the PanB family. As to quaternary structure, homodecamer; pentamer of dimers. It depends on Mg(2+) as a cofactor.

It is found in the cytoplasm. It catalyses the reaction 3-methyl-2-oxobutanoate + (6R)-5,10-methylene-5,6,7,8-tetrahydrofolate + H2O = 2-dehydropantoate + (6S)-5,6,7,8-tetrahydrofolate. It participates in cofactor biosynthesis; (R)-pantothenate biosynthesis; (R)-pantoate from 3-methyl-2-oxobutanoate: step 1/2. In terms of biological role, catalyzes the reversible reaction in which hydroxymethyl group from 5,10-methylenetetrahydrofolate is transferred onto alpha-ketoisovalerate to form ketopantoate. The polypeptide is 3-methyl-2-oxobutanoate hydroxymethyltransferase (Proteus mirabilis (strain HI4320)).